A 366-amino-acid polypeptide reads, in one-letter code: 2-aminoethylphosphonate--pyruvate transaminase (366 aa).

Lys-192 carries the N6-(pyridoxal phosphate)lysine modification.

Belongs to the class-V pyridoxal-phosphate-dependent aminotransferase family. PhnW subfamily. In terms of assembly, homodimer. Pyridoxal 5'-phosphate serves as cofactor.

It carries out the reaction (2-aminoethyl)phosphonate + pyruvate = phosphonoacetaldehyde + L-alanine. In terms of biological role, involved in phosphonate degradation. The chain is 2-aminoethylphosphonate--pyruvate transaminase (phnW) from Lysinibacillus sphaericus (strain C3-41).